A 359-amino-acid polypeptide reads, in one-letter code: UPF0283 membrane protein Atu1356 (359 aa).

The segment at 1 to 39 (MKAPTQNDPQTRRPAAFTLETEEAARPSATQKRAPRSFD) is disordered. The next 2 helical transmembrane spans lie at 75-95 (FGKL…GLWA) and 108-128 (WLGY…LALV).

This sequence belongs to the UPF0283 family.

Its subcellular location is the cell inner membrane. The sequence is that of UPF0283 membrane protein Atu1356 from Agrobacterium fabrum (strain C58 / ATCC 33970) (Agrobacterium tumefaciens (strain C58)).